Consider the following 1379-residue polypeptide: DNA-directed RNA polymerase subunit beta (1379 aa).

Belongs to the RNA polymerase beta chain family. In terms of assembly, the RNAP catalytic core consists of 2 alpha, 1 beta, 1 beta' and 1 omega subunit. When a sigma factor is associated with the core the holoenzyme is formed, which can initiate transcription.

It carries out the reaction RNA(n) + a ribonucleoside 5'-triphosphate = RNA(n+1) + diphosphate. Its function is as follows. DNA-dependent RNA polymerase catalyzes the transcription of DNA into RNA using the four ribonucleoside triphosphates as substrates. This chain is DNA-directed RNA polymerase subunit beta, found in Ruegeria sp. (strain TM1040) (Silicibacter sp.).